We begin with the raw amino-acid sequence, 152 residues long: MEDFKYRNYYVLRVTGGQEINVALILEERIKTNNINEIFSVVVPPNIKGYVILEATGPHVVKLISSGIRHVKGVAHGLIQKEDVTKFVSKSVALPAVKEGDLVEVISGPFRGMQAQVVRVESTKNEVVLNILESSYPVQVTVPLEQVKPVKR.

Residues 99–129 (EGDLVEVISGPFRGMQAQVVRVESTKNEVVL) enclose the KOW domain.

Belongs to the archaeal Spt5 family. As to quaternary structure, heterodimer composed of Spt4 and Spt5. Interacts with RNA polymerase (RNAP).

In terms of biological role, stimulates transcription elongation. The chain is Transcription elongation factor Spt5 from Sulfolobus acidocaldarius (strain ATCC 33909 / DSM 639 / JCM 8929 / NBRC 15157 / NCIMB 11770).